Reading from the N-terminus, the 824-residue chain is FT-interacting protein 1 (824 aa).

C2 domains lie at Trp48–Tyr170, Val217–Phe341, and Tyr385–Tyr522. Transmembrane regions (helical) follow at residues Ala625–Trp645, Leu657–Phe677, and Ala764–Phe784.

This sequence belongs to the MCTP family. In terms of assembly, interacts with RFT1 and PI4KG4. As to expression, specifically expressed in the phloem including companion cells.

Its subcellular location is the endoplasmic reticulum membrane. Its function is as follows. Involved in the export of the long day-specific flower-promoting signal (florigen) RFT1 from the phloem companion cells to sieve elements. Promotes flowering under long days through the transport of RFT1 from the leaves to the shoot apical meristem (SAM). The chain is FT-interacting protein 1 from Oryza sativa subsp. japonica (Rice).